Consider the following 342-residue polypeptide: tRNA N6-adenosine threonylcarbamoyltransferase (342 aa).

Residues histidine 111 and histidine 115 each contribute to the Fe cation site. Substrate-binding positions include 134–138 (LVSGG), aspartate 167, glycine 180, and asparagine 277. Aspartate 305 contributes to the Fe cation binding site.

This sequence belongs to the KAE1 / TsaD family. Fe(2+) is required as a cofactor.

It is found in the cytoplasm. It catalyses the reaction L-threonylcarbamoyladenylate + adenosine(37) in tRNA = N(6)-L-threonylcarbamoyladenosine(37) in tRNA + AMP + H(+). Required for the formation of a threonylcarbamoyl group on adenosine at position 37 (t(6)A37) in tRNAs that read codons beginning with adenine. Is involved in the transfer of the threonylcarbamoyl moiety of threonylcarbamoyl-AMP (TC-AMP) to the N6 group of A37, together with TsaE and TsaB. TsaD likely plays a direct catalytic role in this reaction. The polypeptide is tRNA N6-adenosine threonylcarbamoyltransferase (Haemophilus influenzae (strain ATCC 51907 / DSM 11121 / KW20 / Rd)).